The chain runs to 169 residues: Inorganic pyrophosphatase (169 aa).

Positions 26, 40, and 52 each coordinate substrate. Asp62, Asp67, and Asp99 together coordinate Mg(2+). Residue Tyr138 participates in substrate binding.

It belongs to the PPase family. As to quaternary structure, homohexamer. Mg(2+) serves as cofactor.

The protein localises to the cytoplasm. The enzyme catalyses diphosphate + H2O = 2 phosphate + H(+). Its function is as follows. Catalyzes the hydrolysis of inorganic pyrophosphate (PPi) forming two phosphate ions. The chain is Inorganic pyrophosphatase from Thermoplasma volcanium (strain ATCC 51530 / DSM 4299 / JCM 9571 / NBRC 15438 / GSS1).